A 304-amino-acid chain; its full sequence is Glycine--tRNA ligase alpha subunit (304 aa).

The protein belongs to the class-II aminoacyl-tRNA synthetase family. Tetramer of two alpha and two beta subunits.

It is found in the cytoplasm. The catalysed reaction is tRNA(Gly) + glycine + ATP = glycyl-tRNA(Gly) + AMP + diphosphate. This is Glycine--tRNA ligase alpha subunit from Streptococcus agalactiae serotype Ia (strain ATCC 27591 / A909 / CDC SS700).